An 88-amino-acid chain; its full sequence is Small ribosomal subunit protein uS15 (88 aa).

The protein belongs to the universal ribosomal protein uS15 family. As to quaternary structure, part of the 30S ribosomal subunit. Forms a bridge to the 50S subunit in the 70S ribosome, contacting the 23S rRNA.

Functionally, one of the primary rRNA binding proteins, it binds directly to 16S rRNA where it helps nucleate assembly of the platform of the 30S subunit by binding and bridging several RNA helices of the 16S rRNA. In terms of biological role, forms an intersubunit bridge (bridge B4) with the 23S rRNA of the 50S subunit in the ribosome. This chain is Small ribosomal subunit protein uS15, found in Francisella tularensis subsp. novicida (strain U112).